The primary structure comprises 277 residues: Large ribosomal subunit protein uL2 (277 aa).

Disordered stretches follow at residues 1 to 58 and 223 to 277; these read MGIR…GGGH and GVVM…GKKR. Residues 23–33 show a composition bias toward basic and acidic residues; sequence EITRSEPEKSL. A compositionally biased stretch (basic residues) spans 37–58; it reads LHGRGGRNAHGKITTRHKGGGH. Positions 251-267 are enriched in basic and acidic residues; it reads GKPEGRTRRNKPSDKLI. A compositionally biased stretch (basic residues) spans 268 to 277; the sequence is VRRRRTGKKR.

Belongs to the universal ribosomal protein uL2 family. In terms of assembly, part of the 50S ribosomal subunit. Forms a bridge to the 30S subunit in the 70S ribosome.

Functionally, one of the primary rRNA binding proteins. Required for association of the 30S and 50S subunits to form the 70S ribosome, for tRNA binding and peptide bond formation. It has been suggested to have peptidyltransferase activity; this is somewhat controversial. Makes several contacts with the 16S rRNA in the 70S ribosome. The protein is Large ribosomal subunit protein uL2 of Saccharopolyspora erythraea (strain ATCC 11635 / DSM 40517 / JCM 4748 / NBRC 13426 / NCIMB 8594 / NRRL 2338).